The primary structure comprises 331 residues: Adenosine deaminase (331 aa).

Residues His-12 and His-14 each contribute to the Zn(2+) site. Substrate contacts are provided by His-14, Asp-16, and Gly-170. His-197 is a Zn(2+) binding site. Glu-200 acts as the Proton donor in catalysis. Position 278 (Asp-278) interacts with Zn(2+).

This sequence belongs to the metallo-dependent hydrolases superfamily. Adenosine and AMP deaminases family. Adenosine deaminase subfamily. Zn(2+) is required as a cofactor.

It carries out the reaction adenosine + H2O + H(+) = inosine + NH4(+). The catalysed reaction is 2'-deoxyadenosine + H2O + H(+) = 2'-deoxyinosine + NH4(+). In terms of biological role, catalyzes the hydrolytic deamination of adenosine and 2-deoxyadenosine. The sequence is that of Adenosine deaminase from Vibrio vulnificus (strain CMCP6).